The chain runs to 94 residues: Cystatin-A3 (94 aa).

Positions 46-50 (QLVNG) match the Secondary area of contact motif.

It belongs to the cystatin family.

Its subcellular location is the cytoplasm. Its function is as follows. Intracellular thiol proteinase inhibitor. This chain is Cystatin-A3 (cpiC), found in Dictyostelium discoideum (Social amoeba).